Reading from the N-terminus, the 474-residue chain is Mitogen-activated protein kinase pmk-3 (474 aa).

Low complexity predominate over residues 1-13 (MASVPSSSSLPVS). The disordered stretch occupies residues 1 to 90 (MASVPSSSSL…EEEEDILSKP (90 aa)). Residues 30–48 (KRSNNQSQPPESYEPNTWL) are compositionally biased toward polar residues. The span at 52–69 (REQEQQKKLAAENIKKQS) shows a compositional bias: basic and acidic residues. The 306-residue stretch at 114–419 (YDVEPNSIEY…VEEAIQHPYL (306 aa)) folds into the Protein kinase domain. ATP-binding positions include 124–132 (LGGGSFGNV) and Lys150. Residue Asp252 is the Proton acceptor of the active site. Phosphothreonine is present on Thr285. The TXY motif lies at 285-287 (TQY). At Tyr287 the chain carries Phosphotyrosine.

It belongs to the protein kinase superfamily. CMGC Ser/Thr protein kinase family. MAP kinase subfamily. In terms of assembly, interacts with mak-2. May interact with vhp-1. May interact with uev-3. Mg(2+) is required as a cofactor. In terms of processing, dually phosphorylated on Thr-285 and Tyr-287, which activates the enzyme. In terms of tissue distribution, expressed throughout the intestine.

Its subcellular location is the nucleus. The protein resides in the cytoplasm. It is found in the cell projection. The protein localises to the axon. It localises to the dendrite. Its subcellular location is the cilium. It carries out the reaction L-seryl-[protein] + ATP = O-phospho-L-seryl-[protein] + ADP + H(+). The enzyme catalyses L-threonyl-[protein] + ATP = O-phospho-L-threonyl-[protein] + ADP + H(+). Activated by phosphorylation on threonine and tyrosine. Functionally, responds to activation by environmental stress and pro-inflammatory cytokines by phosphorylating downstream targets. Involved in axon regeneration after injury, probably downstream of dlk-1 and mkk-4 and upstream of mak-2. May phosphorylate mak-2. Plays a role in cilium length regulation, possibly by reducing rab-5 mediated endocytosis. Plays a role in the formation of muscle connections, also called muscle arm extensions, between the body wall and the motor axons in the dorsal and ventral cord. The sequence is that of Mitogen-activated protein kinase pmk-3 (pmk-3) from Caenorhabditis elegans.